A 537-amino-acid polypeptide reads, in one-letter code: Phosphoenolpyruvate carboxykinase (ATP) (537 aa).

3 residues coordinate substrate: R61, Y195, and K201. ATP is bound by residues K201, H220, and 236–244 (GLSGTGKTT). Residues K201 and H220 each coordinate Mn(2+). Residue D257 participates in Mn(2+) binding. E285 is an ATP binding site. The segment covering 312–321 (DFNDGSKTEN) has biased composition (basic and acidic residues). The segment at 312–339 (DFNDGSKTENTRSAYPLESIPNASPTGR) is disordered. Substrate is bound at residue R323. R323 and T448 together coordinate ATP.

Belongs to the phosphoenolpyruvate carboxykinase (ATP) family. Requires Mn(2+) as cofactor.

Its subcellular location is the cytoplasm. The catalysed reaction is oxaloacetate + ATP = phosphoenolpyruvate + ADP + CO2. It functions in the pathway carbohydrate biosynthesis; gluconeogenesis. Its function is as follows. Involved in the gluconeogenesis. Catalyzes the conversion of oxaloacetate (OAA) to phosphoenolpyruvate (PEP) through direct phosphoryl transfer between the nucleoside triphosphate and OAA. The sequence is that of Phosphoenolpyruvate carboxykinase (ATP) from Rhodopseudomonas palustris (strain BisB18).